Consider the following 205-residue polypeptide: Putative epidermin response regulator (205 aa).

The segment at residues 103–200 (KYIKYVNDDF…ERKLGYKILI (98 aa)) is a DNA-binding region (ompR/PhoB-type).

To the C-terminus of E.coli phosphate regulon transcriptional regulatory protein PhoB.

This chain is Putative epidermin response regulator (epiQ), found in Staphylococcus epidermidis.